The following is a 354-amino-acid chain: RH-like protein (354 aa).

8 helical membrane passes run 11–31 (GCLPLWALTLEAALILLFFFF), 45–65 (VATYQVGQDLTVMAALGLGFL), 77–97 (VAFNLFMLALGVQWAILLDGF), 125–145 (ISVGAVLGKVNLVQLVVMVLV), 167–187 (VNIMHIHVFAAYFGLTVAWCL), 209–229 (AMLGALFLWIFWPSFNSALLT), 238–258 (VFNTYYALAVSTVTAISVSSL), and 287–307 (LISSPWLAMVLGLVAGLISIG).

This sequence belongs to the ammonium transporter (TC 2.A.49) family. Rh subfamily.

Its subcellular location is the membrane. Its function is as follows. May be part of an oligomeric complex which is likely to have a transport or channel function in the erythrocyte membrane. This Hylobates pileatus (Pileated gibbon) protein is RH-like protein.